Reading from the N-terminus, the 343-residue chain is Anthranilate phosphoribosyltransferase (343 aa).

5-phospho-alpha-D-ribose 1-diphosphate is bound by residues glycine 85, 88–89, threonine 93, 95–98, 113–121, and alanine 125; these read GD, NIST, and KHGGRSVSS. An anthranilate-binding site is contributed by glycine 85. Serine 97 contacts Mg(2+). Arginine 171 is an anthranilate binding site. The Mg(2+) site is built by aspartate 230 and glutamate 231.

The protein belongs to the anthranilate phosphoribosyltransferase family. As to quaternary structure, homodimer. Mg(2+) is required as a cofactor.

The catalysed reaction is N-(5-phospho-beta-D-ribosyl)anthranilate + diphosphate = 5-phospho-alpha-D-ribose 1-diphosphate + anthranilate. The protein operates within amino-acid biosynthesis; L-tryptophan biosynthesis; L-tryptophan from chorismate: step 2/5. Its function is as follows. Catalyzes the transfer of the phosphoribosyl group of 5-phosphorylribose-1-pyrophosphate (PRPP) to anthranilate to yield N-(5'-phosphoribosyl)-anthranilate (PRA). This chain is Anthranilate phosphoribosyltransferase, found in Aromatoleum aromaticum (strain DSM 19018 / LMG 30748 / EbN1) (Azoarcus sp. (strain EbN1)).